The following is a 146-amino-acid chain: D-aminoacyl-tRNA deacylase (146 aa).

Residues 137–138 (GP) carry the Gly-cisPro motif, important for rejection of L-amino acids motif.

Belongs to the DTD family. Homodimer.

It localises to the cytoplasm. It catalyses the reaction glycyl-tRNA(Ala) + H2O = tRNA(Ala) + glycine + H(+). The enzyme catalyses a D-aminoacyl-tRNA + H2O = a tRNA + a D-alpha-amino acid + H(+). In terms of biological role, an aminoacyl-tRNA editing enzyme that deacylates mischarged D-aminoacyl-tRNAs. Also deacylates mischarged glycyl-tRNA(Ala), protecting cells against glycine mischarging by AlaRS. Acts via tRNA-based rather than protein-based catalysis; rejects L-amino acids rather than detecting D-amino acids in the active site. By recycling D-aminoacyl-tRNA to D-amino acids and free tRNA molecules, this enzyme counteracts the toxicity associated with the formation of D-aminoacyl-tRNA entities in vivo and helps enforce protein L-homochirality. This chain is D-aminoacyl-tRNA deacylase, found in Acinetobacter baylyi (strain ATCC 33305 / BD413 / ADP1).